Reading from the N-terminus, the 68-residue chain is ATP synthase F(0) complex subunit 8 (68 aa).

A helical membrane pass occupies residues 8–24; sequence VWPTIITSMLLTLFLLM. Lys-54 bears the N6-acetyllysine; alternate mark. Position 54 is an N6-succinyllysine; alternate (Lys-54). Lys-57 is subject to N6-acetyllysine.

The protein belongs to the ATPase protein 8 family. As to quaternary structure, component of the ATP synthase complex composed at least of ATP5F1A/subunit alpha, ATP5F1B/subunit beta, ATP5MC1/subunit c (homooctomer), MT-ATP6/subunit a, MT-ATP8/subunit 8, ATP5ME/subunit e, ATP5MF/subunit f, ATP5MG/subunit g, ATP5MK/subunit k, ATP5MJ/subunit j, ATP5F1C/subunit gamma, ATP5F1D/subunit delta, ATP5F1E/subunit epsilon, ATP5PF/subunit F6, ATP5PB/subunit b, ATP5PD/subunit d, ATP5PO/subunit OSCP. ATP synthase complex consists of a soluble F(1) head domain (subunits alpha(3) and beta(3)) - the catalytic core - and a membrane F(0) domain - the membrane proton channel (subunits c, a, 8, e, f, g, k and j). These two domains are linked by a central stalk (subunits gamma, delta, and epsilon) rotating inside the F1 region and a stationary peripheral stalk (subunits F6, b, d, and OSCP). Interacts with PRICKLE3.

It localises to the mitochondrion membrane. In terms of biological role, subunit 8, of the mitochondrial membrane ATP synthase complex (F(1)F(0) ATP synthase or Complex V) that produces ATP from ADP in the presence of a proton gradient across the membrane which is generated by electron transport complexes of the respiratory chain. ATP synthase complex consist of a soluble F(1) head domain - the catalytic core - and a membrane F(1) domain - the membrane proton channel. These two domains are linked by a central stalk rotating inside the F(1) region and a stationary peripheral stalk. During catalysis, ATP synthesis in the catalytic domain of F(1) is coupled via a rotary mechanism of the central stalk subunits to proton translocation. In vivo, can only synthesize ATP although its ATP hydrolase activity can be activated artificially in vitro. Part of the complex F(0) domain. In Symphalangus syndactylus (Siamang), this protein is ATP synthase F(0) complex subunit 8.